Consider the following 581-residue polypeptide: Pyridine nucleotide-disulfide oxidoreductase domain-containing protein 2 (581 aa).

38–71 (VVIGAGHNGLVAAAYLQRLGVNTAVFERRHVIGG) provides a ligand contact to FAD.

The protein belongs to the carotenoid/retinoid oxidoreductase family. In terms of assembly, interacts with COX5B; this interaction may contribute to localize PYROXD2 to the inner face of the inner mitochondrial membrane.

The protein resides in the mitochondrion matrix. Probable oxidoreductase that may play a role as regulator of mitochondrial function. The polypeptide is Pyridine nucleotide-disulfide oxidoreductase domain-containing protein 2 (Mus musculus (Mouse)).